The chain runs to 564 residues: Urocanate hydratase (564 aa).

Residues glycine 58 to glycine 59, glutamine 136, glycine 182 to glycine 184, glutamate 202, arginine 207, asparagine 245 to alanine 246, glutamine 266 to histidine 270, tyrosine 276 to leucine 277, and tyrosine 325 contribute to the NAD(+) site. The active site involves cysteine 413. Glycine 495 contacts NAD(+).

The protein belongs to the urocanase family. NAD(+) serves as cofactor.

The protein resides in the cytoplasm. It catalyses the reaction 4-imidazolone-5-propanoate = trans-urocanate + H2O. Its pathway is amino-acid degradation; L-histidine degradation into L-glutamate; N-formimidoyl-L-glutamate from L-histidine: step 2/3. Catalyzes the conversion of urocanate to 4-imidazolone-5-propionate. This Vibrio atlanticus (strain LGP32) (Vibrio splendidus (strain Mel32)) protein is Urocanate hydratase.